The chain runs to 306 residues: SDS degradation transcriptional activation protein (306 aa).

Positions 1 to 59 constitute an HTH lysR-type domain; sequence MNDLRQLRHFVALAEHGHFARAAEAVNLSQPALSRSIQALENGLGCRLLDRGPRQVSLT. Positions 19-38 form a DNA-binding region, H-T-H motif; it reads FARAAEAVNLSQPALSRSIQ.

The protein belongs to the LysR transcriptional regulatory family.

Its function is as follows. Activates the transcription of the sdsA gene for sodium dodecyl sulfate (SDS) degradation. The polypeptide is SDS degradation transcriptional activation protein (sdsB) (Pseudomonas sp. (strain ATCC 19151)).